The chain runs to 662 residues: Transketolase (662 aa).

H28 contacts substrate. Residues H68 and 115–117 (GPL) each bind thiamine diphosphate. D156 contacts Mg(2+). Residues G157 and N186 each contribute to the thiamine diphosphate site. Residues N186 and I188 each contribute to the Mg(2+) site. Substrate contacts are provided by H261, R356, and S383. Residue H261 participates in thiamine diphosphate binding. E410 (proton donor) is an active-site residue. F436 is a binding site for thiamine diphosphate. Substrate contacts are provided by H460, D468, and R519.

It belongs to the transketolase family. Homodimer. Requires Mg(2+) as cofactor. Ca(2+) is required as a cofactor. Mn(2+) serves as cofactor. The cofactor is Co(2+). It depends on thiamine diphosphate as a cofactor.

The enzyme catalyses D-sedoheptulose 7-phosphate + D-glyceraldehyde 3-phosphate = aldehydo-D-ribose 5-phosphate + D-xylulose 5-phosphate. The protein operates within carbohydrate biosynthesis; Calvin cycle. It participates in carbohydrate degradation; pentose phosphate pathway. In terms of biological role, catalyzes the transfer of a two-carbon ketol group from a ketose donor to an aldose acceptor, via a covalent intermediate with the cofactor thiamine pyrophosphate. The chain is Transketolase (tkt) from Staphylococcus aureus (strain COL).